Reading from the N-terminus, the 355-residue chain is uncharacterized protein (355 aa).

58–65 (GYIIFGIK) is a binding site for ATP.

This is an uncharacterized protein from Ureaplasma parvum serovar 3 (strain ATCC 700970).